Reading from the N-terminus, the 387-residue chain is MATTKSFLILIVMILATTSSTFASLEEMVTVLSIDGGGIKGIIPGTILEFLEGQLQKMDNNADARLADYFDVIGGTSTGGLLTAMITTPNENNRPFAAANEIVPFYFEHGPHIFNSSTGQFFGPKYDGKYLMQVLQEKLGETRVHQALTEVAISSFDIKTNKPVIFTKSNLAKSPELDAKMYDICYSTAAAPIYFPPHHFVTHTSNGATYEFNLVDGGVATVGDPALLSLSVATRLAQEDPAFSSIKSLDYKQMLLLSLGTGTNSEFDKTYTAEEAAKWGPLRWMLAIQQMTNAASSYMTDYYISTVFQARHSQNNYLRVQENALTGTTTEMDDASEANMELLVQVGETLLKKPVSKDSPETYEEALKRFAKLLSNRKKLRANKASY.

An N-terminal signal peptide occupies residues 1-23 (MATTKSFLILIVMILATTSSTFA). The 199-residue stretch at 32–230 (LSIDGGGIKG…TVGDPALLSL (199 aa)) folds into the PNPLA domain. Positions 36–41 (GGGIKG) match the GXGXXG motif. The GXSXG motif lies at 75-79 (GTSTG). Residue serine 77 is the Nucleophile of the active site. The N-linked (GlcNAc...) asparagine glycan is linked to asparagine 115. Catalysis depends on aspartate 216, which acts as the Proton acceptor. Positions 216-218 (DGG) match the DGA/G motif. The stretch at 322–385 (ENALTGTTTE…NRKKLRANKA (64 aa)) forms a coiled coil.

It belongs to the patatin family. As to expression, tuber.

The protein localises to the vacuole. Functionally, probable lipolytic acyl hydrolase (LAH), an activity which is thought to be involved in the response of tubers to pathogens. This Solanum tuberosum (Potato) protein is Patatin group J-1.